The chain runs to 396 residues: Subtilisin-like protease 5 (396 aa).

The signal sequence occupies residues 1–20 (MTGFFTILSFSLAALSVTNA). A propeptide spanning residues 21–116 (AQILSVPKGA…VEPDAIISQH (96 aa)) is cleaved from the precursor. Positions 37-113 (YIVVMKDDTS…VAFVEPDAII (77 aa)) constitute an Inhibitor I9 domain. Residues 125 to 396 (PWGLSRLSNR…SRLLYNGSGR (272 aa)) enclose the Peptidase S8 domain. Catalysis depends on charge relay system residues Asp-156 and His-187. Asn-230 and Asn-248 each carry an N-linked (GlcNAc...) asparagine glycan. Ser-342 acts as the Charge relay system in catalysis. Positions 376-389 (PTIRNPGPDTTSRL) are enriched in polar residues. The interval 376–396 (PTIRNPGPDTTSRLLYNGSGR) is disordered. N-linked (GlcNAc...) asparagine glycosylation is present at Asn-392.

It belongs to the peptidase S8 family.

The protein localises to the secreted. Secreted subtilisin-like serine protease with keratinolytic activity that contributes to pathogenicity. In Arthroderma benhamiae (strain ATCC MYA-4681 / CBS 112371) (Trichophyton mentagrophytes), this protein is Subtilisin-like protease 5 (SUB5).